A 239-amino-acid polypeptide reads, in one-letter code: Type III effector protein HopBA1 (239 aa).

The span at 1–20 shows a compositional bias: low complexity; it reads MLNRISSSSPTSYVSSGSSS. Residues 1–31 are disordered; that stretch reads MLNRISSSSPTSYVSSGSSSAGINPSINVRP.

It localises to the secreted. The protein localises to the host cell. In terms of biological role, virulence factor recognized by the A.thaliana disease resistance protein RBA1, which triggers plant cell death. HopBA1 enhances RBA1 self-association, which is necessary for ectopic autoactivation of host cell death. This Pseudomonas syringae pv. aptata protein is Type III effector protein HopBA1.